Consider the following 164-residue polypeptide: Putative pre-16S rRNA nuclease (164 aa).

It belongs to the YqgF nuclease family.

The protein localises to the cytoplasm. Could be a nuclease involved in processing of the 5'-end of pre-16S rRNA. The sequence is that of Putative pre-16S rRNA nuclease from Rhizobium johnstonii (strain DSM 114642 / LMG 32736 / 3841) (Rhizobium leguminosarum bv. viciae).